Reading from the N-terminus, the 445-residue chain is Phosphoglucosamine mutase (445 aa).

Ser102 serves as the catalytic Phosphoserine intermediate. Residues Ser102, Asp241, Asp243, and Asp245 each contribute to the Mg(2+) site. At Ser102 the chain carries Phosphoserine.

This sequence belongs to the phosphohexose mutase family. Requires Mg(2+) as cofactor. In terms of processing, activated by phosphorylation.

It carries out the reaction alpha-D-glucosamine 1-phosphate = D-glucosamine 6-phosphate. Catalyzes the conversion of glucosamine-6-phosphate to glucosamine-1-phosphate. This chain is Phosphoglucosamine mutase, found in Cronobacter sakazakii (strain ATCC BAA-894) (Enterobacter sakazakii).